The primary structure comprises 358 residues: Glutamate 5-kinase (358 aa).

Lys-9 contributes to the ATP binding site. Substrate is bound by residues Ser-49, Asp-136, and Asn-148. ATP is bound by residues Thr-168–Asp-169 and Thr-210–Lys-216. Residues Asp-275–Asn-353 form the PUA domain.

Belongs to the glutamate 5-kinase family.

It is found in the cytoplasm. It catalyses the reaction L-glutamate + ATP = L-glutamyl 5-phosphate + ADP. It functions in the pathway amino-acid biosynthesis; L-proline biosynthesis; L-glutamate 5-semialdehyde from L-glutamate: step 1/2. Functionally, catalyzes the transfer of a phosphate group to glutamate to form L-glutamate 5-phosphate. This chain is Glutamate 5-kinase, found in Streptococcus suis (strain 05ZYH33).